The sequence spans 371 residues: MLNEFIAIRRELHQIPETGYKELKTQAYLLDYISKLPSGHLEVKKWRTGILVLVKGTNPEKTIGYRTDIDALPITEETELPFASKHPGNMHACGHDLHMSIALGVLTHFASKPAKDNLLFVFQPAEEGPGGAKPIMESTEFAEWRPDSIYGLHIAPEYKVGEIAIKPGLLFANTSELFISFKGKGGHAAYPHLANDMVVAASAFVGQMQTIISRNIDPMDSAVITIGRIHGGEIQNVIAETAYLDGTIRTLSPETMEIVWTRLKQLAKGWEEAYQCEVEFHPGSDYYQVDNDPVETEEFIHFLEEQYPESYVPARSAMTGEDFGYFLSEIKGFMFWLGVDSEYSLHHAKLNPKEEAIPFAIDVLIHFLESK.

Residue aspartate 68 is part of the active site. Catalysis depends on glutamate 127, which acts as the Proton acceptor.

This sequence belongs to the peptidase M20A family. N-acetyldiaminopimelate deacetylase subfamily.

The enzyme catalyses N-acetyl-(2S,6S)-2,6-diaminopimelate + H2O = (2S,6S)-2,6-diaminopimelate + acetate. It participates in amino-acid biosynthesis; L-lysine biosynthesis via DAP pathway; LL-2,6-diaminopimelate from (S)-tetrahydrodipicolinate (acetylase route): step 3/3. In terms of biological role, catalyzes the conversion of N-acetyl-diaminopimelate to diaminopimelate and acetate. The chain is N-acetyldiaminopimelate deacetylase from Listeria monocytogenes serovar 1/2a (strain ATCC BAA-679 / EGD-e).